The following is a 246-amino-acid chain: tRNA (guanine-N(1)-)-methyltransferase (246 aa).

S-adenosyl-L-methionine is bound by residues glycine 114 and 134–139; that span reads IGDYIL. Residues 219-231 show a composition bias toward basic and acidic residues; that stretch reads LRRPDLWERHEGA. Residues 219-246 form a disordered region; it reads LRRPDLWERHEGARAQSPSGARRQKKER.

The protein belongs to the RNA methyltransferase TrmD family. As to quaternary structure, homodimer.

The protein localises to the cytoplasm. It carries out the reaction guanosine(37) in tRNA + S-adenosyl-L-methionine = N(1)-methylguanosine(37) in tRNA + S-adenosyl-L-homocysteine + H(+). Functionally, specifically methylates guanosine-37 in various tRNAs. This chain is tRNA (guanine-N(1)-)-methyltransferase, found in Rhizorhabdus wittichii (strain DSM 6014 / CCUG 31198 / JCM 15750 / NBRC 105917 / EY 4224 / RW1) (Sphingomonas wittichii).